We begin with the raw amino-acid sequence, 323 residues long: Beta-ketoacyl-[acyl-carrier-protein] synthase III (323 aa).

Residues C113 and H250 contribute to the active site. The tract at residues 251-255 (QANKR) is ACP-binding. N280 is a catalytic residue.

It belongs to the thiolase-like superfamily. FabH family. In terms of assembly, homodimer.

Its subcellular location is the cytoplasm. It catalyses the reaction malonyl-[ACP] + acetyl-CoA + H(+) = 3-oxobutanoyl-[ACP] + CO2 + CoA. The protein operates within lipid metabolism; fatty acid biosynthesis. Functionally, catalyzes the condensation reaction of fatty acid synthesis by the addition to an acyl acceptor of two carbons from malonyl-ACP. Catalyzes the first condensation reaction which initiates fatty acid synthesis and may therefore play a role in governing the total rate of fatty acid production. Possesses both acetoacetyl-ACP synthase and acetyl transacylase activities. Its substrate specificity determines the biosynthesis of branched-chain and/or straight-chain of fatty acids. The protein is Beta-ketoacyl-[acyl-carrier-protein] synthase III of Brucella suis (strain ATCC 23445 / NCTC 10510).